Reading from the N-terminus, the 230-residue chain is MAHPSQLGFQDAASPVMEELLHFHDHALMIVLLISTLVLYIIVAMVSTKLTNMYILDSQEIEIVWTVLPAVILILIALPSLRILYLMDEINDPHLTIKAMGHQWYWSYEYTDYEDLGFDSYMVPTQDLVPGQFRLLETDHRMVVPVESPIRVLVSAEDVLHSWAVPSLGVKMDAVPGRLNQTAFIASRPGVFYGQCSEICGANHSFMPIVVEAVPLEHFEKWSTMMLEDA.

Over 1 to 14 the chain is Mitochondrial intermembrane; the sequence is MAHPSQLGFQDAAS. Residues 15–45 form a helical membrane-spanning segment; sequence PVMEELLHFHDHALMIVLLISTLVLYIIVAM. Residues 46-59 lie on the Mitochondrial matrix side of the membrane; that stretch reads VSTKLTNMYILDSQ. Residues 60 to 87 form a helical membrane-spanning segment; it reads EIEIVWTVLPAVILILIALPSLRILYLM. Over 88–230 the chain is Mitochondrial intermembrane; that stretch reads DEINDPHLTI…KWSTMMLEDA (143 aa). Residues His-161, Cys-196, Glu-198, Cys-200, His-204, and Met-207 each coordinate Cu cation. Residue Glu-198 coordinates Mg(2+).

This sequence belongs to the cytochrome c oxidase subunit 2 family. In terms of assembly, component of the cytochrome c oxidase (complex IV, CIV), a multisubunit enzyme composed of 14 subunits. The complex is composed of a catalytic core of 3 subunits MT-CO1, MT-CO2 and MT-CO3, encoded in the mitochondrial DNA, and 11 supernumerary subunits COX4I, COX5A, COX5B, COX6A, COX6B, COX6C, COX7A, COX7B, COX7C, COX8 and NDUFA4, which are encoded in the nuclear genome. The complex exists as a monomer or a dimer and forms supercomplexes (SCs) in the inner mitochondrial membrane with NADH-ubiquinone oxidoreductase (complex I, CI) and ubiquinol-cytochrome c oxidoreductase (cytochrome b-c1 complex, complex III, CIII), resulting in different assemblies (supercomplex SCI(1)III(2)IV(1) and megacomplex MCI(2)III(2)IV(2)). Found in a complex with TMEM177, COA6, COX18, COX20, SCO1 and SCO2. Interacts with TMEM177 in a COX20-dependent manner. Interacts with COX20. Interacts with COX16. Cu cation serves as cofactor.

The protein resides in the mitochondrion inner membrane. It carries out the reaction 4 Fe(II)-[cytochrome c] + O2 + 8 H(+)(in) = 4 Fe(III)-[cytochrome c] + 2 H2O + 4 H(+)(out). Its function is as follows. Component of the cytochrome c oxidase, the last enzyme in the mitochondrial electron transport chain which drives oxidative phosphorylation. The respiratory chain contains 3 multisubunit complexes succinate dehydrogenase (complex II, CII), ubiquinol-cytochrome c oxidoreductase (cytochrome b-c1 complex, complex III, CIII) and cytochrome c oxidase (complex IV, CIV), that cooperate to transfer electrons derived from NADH and succinate to molecular oxygen, creating an electrochemical gradient over the inner membrane that drives transmembrane transport and the ATP synthase. Cytochrome c oxidase is the component of the respiratory chain that catalyzes the reduction of oxygen to water. Electrons originating from reduced cytochrome c in the intermembrane space (IMS) are transferred via the dinuclear copper A center (CU(A)) of subunit 2 and heme A of subunit 1 to the active site in subunit 1, a binuclear center (BNC) formed by heme A3 and copper B (CU(B)). The BNC reduces molecular oxygen to 2 water molecules using 4 electrons from cytochrome c in the IMS and 4 protons from the mitochondrial matrix. This Oncorhynchus mykiss (Rainbow trout) protein is Cytochrome c oxidase subunit 2 (mt-co2).